The chain runs to 562 residues: Phosphatidylinositol 4-phosphate 5-kinase type-1 alpha (562 aa).

The 369-residue stretch at 81–449 (TSSALKGAIQ…RFQRFMCNTV (369 aa)) folds into the PIPK domain. A Glycyl lysine isopeptide (Lys-Gly) (interchain with G-Cter in ubiquitin) cross-link involves residue Lys103. Residue Ser486 is modified to Phosphoserine. Positions 506 to 526 (HLGRPDVLPQTPPLEEISEGS) are disordered.

Interacts with RAC1. Interacts with TUT1. Forms a complex with CDH1/E-cadherin, CTNNB1/beta-catenin and CTNND1 at the plasma membrane upon calcium stimulation. Found in a ternary complex with IRS1 and DGKZ in the absence of insulin stimulation. Interacts with DGKZ. Interacts with PIP4K2C; the interaction inhibits PIP5K1A kinase activity. Highly expressed in heart, placenta, skeletal muscle, kidney and pancreas. Detected at lower levels in brain, lung and liver.

Its subcellular location is the cell membrane. The protein resides in the cytoplasm. It localises to the nucleus. It is found in the nucleus speckle. The protein localises to the cell projection. Its subcellular location is the ruffle. The protein resides in the lamellipodium. It carries out the reaction a 1,2-diacyl-sn-glycero-3-phospho-(1D-myo-inositol 4-phosphate) + ATP = a 1,2-diacyl-sn-glycero-3-phospho-(1D-myo-inositol-4,5-bisphosphate) + ADP + H(+). The catalysed reaction is 1-octadecanoyl-2-(5Z,8Z,11Z,14Z)-eicosatetraenoyl-sn-glycero-3-phospho-1D-myo-inositol 4-phosphate + ATP = 1-octadecanoyl-2-(5Z,8Z,11Z,14Z)-eicosatetraenoyl-sn-glycero-3-phospho-1D-myo-inositol 4,5-bisphosphate + ADP + H(+). It catalyses the reaction 1,2-dihexadecanoyl-sn-glycero-3-phospho-(1D-myo-inositol-4-phosphate) + ATP = 1,2-dihexadecanoyl-sn-glycero-3-phospho-(1D-myo-inositol-4,5-bisphosphate) + ADP + H(+). The enzyme catalyses 1-octadecanoyl-2-(9Z)-octadecenoyl-sn-glycero-3-phospho-1D-myo-inositol 4-phosphate + ATP = 1-octadecanoyl-2-(9Z)-octadecenoyl-sn-glycero-3-phospho-1D-myo-inositol 4,5-bisphosphate + ADP + H(+). It carries out the reaction 1-octadecanoyl-2-(9Z)-octadecenoyl-sn-glycero-3-phospho-1D-myo-inositol + ATP = 1-octadecanoyl-2-(9Z)-octadecenoyl-sn-glycero-3-phospho-1D-myo-inositol 5-phosphate + ADP + H(+). The catalysed reaction is 1-octadecanoyl-2-(9Z,12Z)-octadecadienoyl-sn-glycero-3-phospho-1D-myo-inositol + ATP = 1-octadecanoyl-2-(9Z,12Z)-octadecadienoyl-sn-glycero-3-phospho-1D-myo-inositol 5-phosphate + ADP + H(+). It catalyses the reaction 1-octadecanoyl-2-(5Z,8Z,11Z,14Z-eicosatetraenoyl)-sn-glycero-3-phospho-(1D-myo-inositol) + ATP = 1-octadecanoyl-2-(5Z,8Z,11Z,14Z)-eicosatetraenoyl-sn-glycero-3-phospho-1D-myo-inositol 5-phosphate + ADP + H(+). The enzyme catalyses 1,2-di-(9Z,12Z)-octadecadienoyl-sn-glycero-3-phospho-1D-myo-inositol + ATP = 1,2-di(9Z,12Z)-octadecadienoyl-sn-glycero-3-phospho-1D-myo-inositol 5-phosphate + ADP + H(+). Its activity is regulated as follows. Activated by diarachidonoyl phosphatidic acid (DAPA), when 1,2-dipalmitoyl-PI4P is used as a substrate. Functionally, catalyzes the phosphorylation of phosphatidylinositol 4-phosphate (PtdIns(4)P/PI4P) to form phosphatidylinositol 4,5-bisphosphate (PtdIns(4,5)P2/PIP2), a lipid second messenger that regulates several cellular processes such as signal transduction, vesicle trafficking, actin cytoskeleton dynamics, cell adhesion, and cell motility. PtdIns(4,5)P2 can directly act as a second messenger or can be utilized as a precursor to generate other second messengers: inositol 1,4,5-trisphosphate (IP3), diacylglycerol (DAG) or phosphatidylinositol-3,4,5-trisphosphate (PtdIns(3,4,5)P3/PIP3). PIP5K1A-mediated phosphorylation of PtdIns(4)P is the predominant pathway for PtdIns(4,5)P2 synthesis. Can also use phosphatidylinositol (PtdIns) as substrate in vitro. Together with PIP5K1C, is required for phagocytosis, both enzymes regulating different types of actin remodeling at sequential steps. Promotes particle ingestion by activating the WAS GTPase-binding protein that induces Arp2/3 dependent actin polymerization at the nascent phagocytic cup. Together with PIP5K1B, is required, after stimulation by G-protein coupled receptors, for the synthesis of IP3 that will induce stable platelet adhesion. Recruited to the plasma membrane by the E-cadherin/beta-catenin complex where it provides the substrate PtdIns(4,5)P2 for the production of PtdIns(3,4,5)P3, IP3 and DAG, that will mobilize internal calcium and drive keratinocyte differentiation. Positively regulates insulin-induced translocation of SLC2A4 to the cell membrane in adipocytes. Together with PIP5K1C has a role during embryogenesis. Independently of its catalytic activity, is required for membrane ruffling formation, actin organization and focal adhesion formation during directional cell migration by controlling integrin-induced translocation of the small GTPase RAC1 to the plasma membrane. Also functions in the nucleus where it acts as an activator of TUT1 adenylyltransferase activity in nuclear speckles, thereby regulating mRNA polyadenylation of a select set of mRNAs. The sequence is that of Phosphatidylinositol 4-phosphate 5-kinase type-1 alpha from Homo sapiens (Human).